The chain runs to 439 residues: MMHRVGFNVIGRRSFFTVNARRQVLKSSFMGLKPLQLTALLLAGSAGYLYFMNARSAIHEYVVCPVVRLITPDPENGHKLGIWCFKWGLSPKLYFDKDPESLHVNVFGTTMTNPIGCAAGLDKDAEAIDGIMPTGFGYMEVGSVTPVAQPGNPRPRFFRLPADDAVINRYGFNSSGHDVVYNNLMKRVNKFLNSYFGDKSIDKLSLYKDKLLAVNLGKNKNGDEVKDYLKGVEKFQSLADVLVINVSSPNTPGLRDLQNEAKLTNLLSEIITKRDSQSNKPNALGKQNHKPPVLVKIAPDLTEPELQSIVEAAKKSKVDGIIVSNTTIQRPNTLKTQDETLRNQVGGLSGKPLKPFALKAMKAVSKYAKDSDLVLVGCGGISSGKDAIEFAKAGATFVQLYTSYAYVGPALIARIKDEVAEELKKEGKTWMEIIGEDNK.

The transit peptide at M1–R22 directs the protein to the mitochondrion. Residues L37–N53 form a helical membrane-spanning segment. FMN contacts are provided by residues A119–K123 and S143. K123 lines the substrate pocket. Residue N168–F172 participates in substrate binding. FMN contacts are provided by N215 and N245. Residue N245–N250 coordinates substrate. Catalysis depends on S248, which acts as the Nucleophile. Positions 296 and 324 each coordinate FMN. N325–T326 contacts substrate. FMN contacts are provided by residues G350, G380, and Y401–T402.

This sequence belongs to the dihydroorotate dehydrogenase family. Type 2 subfamily. FMN serves as cofactor.

Its subcellular location is the mitochondrion inner membrane. The enzyme catalyses (S)-dihydroorotate + a quinone = orotate + a quinol. Its pathway is pyrimidine metabolism; UMP biosynthesis via de novo pathway; orotate from (S)-dihydroorotate (quinone route): step 1/1. Functionally, catalyzes the conversion of dihydroorotate to orotate with quinone as electron acceptor. This Candida glabrata (strain ATCC 2001 / BCRC 20586 / JCM 3761 / NBRC 0622 / NRRL Y-65 / CBS 138) (Yeast) protein is Dihydroorotate dehydrogenase (quinone), mitochondrial (URA9).